Consider the following 169-residue polypeptide: Allophycocyanin subunit beta-18 (169 aa).

Position 72 is an N4-methylasparagine (Asn72). Residue Cys82 participates in (2R,3E)-phycocyanobilin binding.

The protein belongs to the phycobiliprotein family. Heterodimer of an alpha and a beta chain. Contains one covalently linked bilin chromophore.

The protein localises to the plastid. The protein resides in the chloroplast thylakoid membrane. Its function is as follows. Light-harvesting photosynthetic bile pigment-protein from the phycobiliprotein complex. Allophycocyanin has a maximum absorption at approximately 650 nanometers. This is Allophycocyanin subunit beta-18 (apcF) from Porphyra purpurea (Red seaweed).